A 213-amino-acid chain; its full sequence is Golgi apparatus membrane protein TVP23 homolog A (213 aa).

The next 4 membrane-spanning stretches (helical) occupy residues 32-52 (PLAT…YVSC), 54-74 (WFSK…SLDF), 123-143 (IFWL…FSTL), and 150-170 (WLAL…GYIL).

This sequence belongs to the TVP23 family.

The protein resides in the membrane. This Homo sapiens (Human) protein is Golgi apparatus membrane protein TVP23 homolog A (TVP23A).